Here is a 378-residue protein sequence, read N- to C-terminus: Queuine tRNA-ribosyltransferase (378 aa).

Catalysis depends on D91, which acts as the Proton acceptor. Residues 91-95 (DSGGF), D145, Q197, and G224 each bind substrate. D274 serves as the catalytic Nucleophile. The tract at residues 279-283 (TRLAR) is RNA binding; important for wobble base 34 recognition. Positions 312, 314, 317, and 343 each coordinate Zn(2+).

The protein belongs to the queuine tRNA-ribosyltransferase family. Homodimer. Within each dimer, one monomer is responsible for RNA recognition and catalysis, while the other monomer binds to the replacement base PreQ1. It depends on Zn(2+) as a cofactor.

The enzyme catalyses 7-aminomethyl-7-carbaguanine + guanosine(34) in tRNA = 7-aminomethyl-7-carbaguanosine(34) in tRNA + guanine. Its pathway is tRNA modification; tRNA-queuosine biosynthesis. Its function is as follows. Catalyzes the base-exchange of a guanine (G) residue with the queuine precursor 7-aminomethyl-7-deazaguanine (PreQ1) at position 34 (anticodon wobble position) in tRNAs with GU(N) anticodons (tRNA-Asp, -Asn, -His and -Tyr). Catalysis occurs through a double-displacement mechanism. The nucleophile active site attacks the C1' of nucleotide 34 to detach the guanine base from the RNA, forming a covalent enzyme-RNA intermediate. The proton acceptor active site deprotonates the incoming PreQ1, allowing a nucleophilic attack on the C1' of the ribose to form the product. After dissociation, two additional enzymatic reactions on the tRNA convert PreQ1 to queuine (Q), resulting in the hypermodified nucleoside queuosine (7-(((4,5-cis-dihydroxy-2-cyclopenten-1-yl)amino)methyl)-7-deazaguanosine). In Methylacidiphilum infernorum (isolate V4) (Methylokorus infernorum (strain V4)), this protein is Queuine tRNA-ribosyltransferase.